Reading from the N-terminus, the 561-residue chain is Arginine--tRNA ligase (561 aa).

The 'HIGH' region motif lies at 129 to 139; sequence ANPTGPLHIGH.

This sequence belongs to the class-I aminoacyl-tRNA synthetase family. In terms of assembly, monomer.

It is found in the cytoplasm. It catalyses the reaction tRNA(Arg) + L-arginine + ATP = L-arginyl-tRNA(Arg) + AMP + diphosphate. The protein is Arginine--tRNA ligase of Geotalea uraniireducens (strain Rf4) (Geobacter uraniireducens).